Reading from the N-terminus, the 765-residue chain is Glucosamine inositolphosphorylceramide transferase 1 (765 aa).

The next 3 helical transmembrane spans lie at 43-63 (FFASCFGFYAFVAATYAWFVF), 394-414 (VILGYASLAAAISVVILLGFL), and 476-496 (MGKFTLGVIVILGLLLTCVGV). Substrate-binding positions include Asn553, 577–582 (NSLNNR), 598–600 (DDD), Arg628, and 683–687 (FNCED). Position 600 (Asp600) interacts with Mn(2+). Cys685 and Cys738 are disulfide-bonded. Residue Asp687 is part of the active site.

This sequence belongs to the glycosyltransferase 64 family. Mn(2+) is required as a cofactor. Specifically and highly expressed in developing embryos and mature seeds. Also detected at low levels in stigma and pollen.

It localises to the membrane. The enzyme catalyses an N-(2R-hydroxy-very-long-chain fatty acyl)-(R)-4-hydroxysphingoid base + a 1,2-diacyl-sn-glycero-3-phospho-(1D-myo-inositol) = a 1D-myo-inositol-1-phospho-N-[(R)-2-hydroxy-very-long-chain fatty acyl]-(R)-4-hydroxysphingoid base + a 1,2-diacyl-sn-glycerol. It participates in sphingolipid metabolism. Functionally, glycosyltransferase that mediates the glycosylation of glycosylinositol phosphorylceramides (GIPCs), the major sphingolipids in the plasma membrane; acts as a HexN(Ac)-specific GIPC sugar transferase and accepts glucosamine (GlcN) and N-acetylglucosamine (GlcNAc) as the sugar unit. Responsible for the glycosylation of a subgroup of GIPCs found in seeds and pollen that contain GlcNAc and GlcN (GlcN(Ac)). Maybe involved in the maintenance of cell-cell adhesion. This is Glucosamine inositolphosphorylceramide transferase 1 from Arabidopsis thaliana (Mouse-ear cress).